The sequence spans 1059 residues: Nonsense-mediated mRNA decay factor SMG7 (1059 aa).

TPR repeat units follow at residues 149–183 (DQQSQNLSDKDGKELAEVQKALKSCHRCLIYLGDL) and 184–217 (ARYKGMYAEGDSRSRQYASASSYYLQAASLWPAS). Positions 806–817 (SHVSPAHSQSTS) are enriched in polar residues. 4 disordered regions span residues 806–826 (SHVSPAHSQSTSFGGGSKWSP), 927–955 (HLGPPPGFNSVPAKLQKEPAPGSELSGNN), 987–1015 (SGKPEHLGSTGNGLNGPANFPFPGKQVPT), and 1040–1059 (STQLPEQYQGQSTWSSRHFV).

In terms of assembly, interacts with EXA1. Expressed in flowers and at lower levels in stems and leaves.

It localises to the cytoplasm. The protein localises to the P-body. Its function is as follows. Plays multiple roles in growth and development. Involved in nonsense-mediated mRNA decay (NMD). May provide a link to the mRNA degradation machinery to initiate NMD and serve as an adapter for UPF proteins function. Required for meiotic progression through anaphase II of pollen mother cells. May counteract cyclin-dependent kinase (CDK) activity at the end of meiosis. May play a role in plant defense through its involvement in NMD. Together with EXA1, helps to restrict cell death induction during pathogen infection in a salicylic acid- (SA) and reactive oxygen species- (ROS) independent manner. In Arabidopsis thaliana (Mouse-ear cress), this protein is Nonsense-mediated mRNA decay factor SMG7.